The primary structure comprises 417 residues: RH-like protein IIF (417 aa).

A run of 11 helical transmembrane segments spans residues 12 to 32, 44 to 64, 77 to 97, 125 to 145, 172 to 192, 203 to 223, 238 to 258, 265 to 285, 287 to 307, 331 to 351, and 358 to 378; these read CLPL…YFFT, LVAS…GFGF, VAFN…LDGF, ISAG…MVLV, FYLF…KPLP, TIPS…WPSF, VFNT…GSSL, ISMT…GTSC, LIPS…ISIG, NFSL…VRHT, and MIGF…AIAL.

The protein belongs to the ammonium transporter (TC 2.A.49) family. Rh subfamily.

The protein resides in the membrane. Its function is as follows. May be part of an oligomeric complex which is likely to have a transport or channel function in the erythrocyte membrane. In Pan troglodytes (Chimpanzee), this protein is RH-like protein IIF.